We begin with the raw amino-acid sequence, 404 residues long: G-protein coupled receptor 182 (404 aa).

Residues 1–57 (MSVKPSWGPGPSEGVTAVPTSDLGEIHNWTELLDLFNHTLSECHVELSQSTKRVVLF) lie on the Extracellular side of the membrane. Residues N28 and N37 are each glycosylated (N-linked (GlcNAc...) asparagine). A helical membrane pass occupies residues 58–79 (ALYLAMFVVGLVENLLVICVNW). At 80 to 90 (RGSGRAGLMNL) the chain is on the cytoplasmic side. Residues 91 to 113 (YILNMAIADLGIVLSLPVWMLEV) form a helical membrane-spanning segment. At 114–127 (TLDYTWLWGSFSCR) the chain is on the extracellular side. Residues C126 and C202 are joined by a disulfide bond. The helical transmembrane segment at 128–149 (FTHYFYFVNMYSSIFFLVCLSV) threads the bilayer. The Cytoplasmic segment spans residues 150–170 (DRYVTLTSASPSWQRYQHRVR). Residues 171-193 (RAMCAGIWVLSAIIPLPEVVHIQ) traverse the membrane as a helical segment. Topologically, residues 194 to 217 (LVEGPEPMCLFMAPFETYSTWALA) are extracellular. Residues 218–239 (VALSTTILGFLLPFPLITVFNV) traverse the membrane as a helical segment. Residues 240 to 258 (LTACRLRQPGQPKSRRHCL) lie on the Cytoplasmic side of the membrane. A helical membrane pass occupies residues 259–280 (LLCAYVAVFVMCWLPYHVTLLL). The Extracellular segment spans residues 281 to 299 (LTLHGTHISLHCHLVHLLY). Residues 300–320 (FFYDVIDCFSMLHCVINPILY) form a helical membrane-spanning segment. Residues 321-404 (NFLSPHFRGR…ISPTQPLTPS (84 aa)) lie on the Cytoplasmic side of the membrane.

Belongs to the G-protein coupled receptor 1 family. Highly expressed in heart, skeletal muscle, immune system, adrenal gland and liver.

It is found in the cell membrane. In terms of biological role, orphan receptor. In Homo sapiens (Human), this protein is G-protein coupled receptor 182 (GPR182).